The following is a 250-amino-acid chain: AA9 family lytic polysaccharide monooxygenase F (250 aa).

A signal peptide spans 1–21; that stretch reads MAMSKIATLAGLLASAGLVAG. H22 provides a ligand contact to Cu(2+). D51 is an O2 binding site. Disulfide bonds link C77–C200 and C121–C125. Position 107 (H107) interacts with Cu(2+). 2 residues coordinate O2: H186 and Q195. Y197 serves as a coordination point for Cu(2+).

Belongs to the glycosyl hydrolase 61 family. The cofactor is Cu(2+).

It localises to the secreted. It carries out the reaction Endohydrolysis of (1-&gt;4)-beta-D-glucosidic linkages in cellulose, lichenin and cereal beta-D-glucans.. Functionally, lytic polysaccharide monooxygenase (LMPO) that depolymerizes crystalline and amorphous polysaccharides via the oxidation of scissile alpha- or beta-(1-4)-glycosidic bonds, yielding C1 or C4 oxidation products. Catalysis by LPMOs requires the reduction of the active-site copper from Cu(II) to Cu(I) by a reducing agent and H(2)O(2) or O(2) as a cosubstrate. Major secreted component of the extracellular cellulolytic system. The protein is AA9 family lytic polysaccharide monooxygenase F of Emericella nidulans (strain FGSC A4 / ATCC 38163 / CBS 112.46 / NRRL 194 / M139) (Aspergillus nidulans).